A 147-amino-acid polypeptide reads, in one-letter code: Large ribosomal subunit protein uL15 (147 aa).

The span at 1 to 20 shows a compositional bias: basic and acidic residues; it reads MTLRLNDLKPADGARTERTR. Positions 1–61 are disordered; it reads MTLRLNDLKP…GFEGGQTPMQ (61 aa). Residues 23–33 show a composition bias toward gly residues; that stretch reads RGIGSGLGKTA. Basic residues predominate over residues 34-47; that stretch reads GRGHKGSFARKGGG.

The protein belongs to the universal ribosomal protein uL15 family. In terms of assembly, part of the 50S ribosomal subunit.

In terms of biological role, binds to the 23S rRNA. The polypeptide is Large ribosomal subunit protein uL15 (Xanthomonas axonopodis pv. citri (strain 306)).